The sequence spans 233 residues: Biosynthetic peptidoglycan transglycosylase (233 aa).

Residues 8 to 28 form a helical membrane-spanning segment; that stretch reads LIALPVGIFIFFNAYVYGNII.

It belongs to the glycosyltransferase 51 family.

The protein localises to the cell inner membrane. The catalysed reaction is [GlcNAc-(1-&gt;4)-Mur2Ac(oyl-L-Ala-gamma-D-Glu-L-Lys-D-Ala-D-Ala)](n)-di-trans,octa-cis-undecaprenyl diphosphate + beta-D-GlcNAc-(1-&gt;4)-Mur2Ac(oyl-L-Ala-gamma-D-Glu-L-Lys-D-Ala-D-Ala)-di-trans,octa-cis-undecaprenyl diphosphate = [GlcNAc-(1-&gt;4)-Mur2Ac(oyl-L-Ala-gamma-D-Glu-L-Lys-D-Ala-D-Ala)](n+1)-di-trans,octa-cis-undecaprenyl diphosphate + di-trans,octa-cis-undecaprenyl diphosphate + H(+). The protein operates within cell wall biogenesis; peptidoglycan biosynthesis. Functionally, peptidoglycan polymerase that catalyzes glycan chain elongation from lipid-linked precursors. The polypeptide is Biosynthetic peptidoglycan transglycosylase (Neisseria meningitidis serogroup B (strain ATCC BAA-335 / MC58)).